Here is a 473-residue protein sequence, read N- to C-terminus: Protein translocase subunit SecA (473 aa).

Asp127 serves as a coordination point for ATP. The interval 424–447 is disordered; it reads VAEGKAVHQDTSKQEPKKKQPIRK. Zn(2+)-binding residues include Cys457, Cys459, Cys468, and Cys469.

This sequence belongs to the SecA family. As to quaternary structure, monomer and homodimer. Part of the essential Sec protein translocation apparatus which comprises SecA, SecYEG and auxiliary proteins SecDF. Other proteins may also be involved. It depends on Zn(2+) as a cofactor.

It is found in the cell membrane. The protein localises to the cytoplasm. It carries out the reaction ATP + H2O + cellular proteinSide 1 = ADP + phosphate + cellular proteinSide 2.. Its function is as follows. Part of the Sec protein translocase complex. Interacts with the SecYEG preprotein conducting channel. Has a central role in coupling the hydrolysis of ATP to the transfer of proteins into and across the cell membrane, serving as an ATP-driven molecular motor driving the stepwise translocation of polypeptide chains across the membrane. The polypeptide is Protein translocase subunit SecA (Cytobacillus firmus (Bacillus firmus)).